Consider the following 358-residue polypeptide: MAPQNLSTFCLLLLYLIGAVIAGRDFYKILGVPRSASIKDIKKAYRKLALQLHPDRNPDDPQAQEKFQDLGAAYEVLSDSEKRKQYDTYGEEGLKDGHQSSHGDIFSHFFGDFGFMFGGAPRQQDRNIPRGSDIIVDLEVTLEEVYAGNFVEVVRNKPVARQAPGKRKCNCRQEMRTTQLGPGRFQMTQEVVCDECPNVKLVNEERTLEVEIEPGVRDGMEYPFIGEGEPHVDGEPGDLRFRIKVVKHRIFERRGDDLYTNVTVSLVEALVGFEMDITHLDGHKVHISRDKITRPGAKLWKKGEGLPNFDNNNIKGSLIITFDVDFPKEQLTEEAKEGIKQLLKQGPVQKVYNGLQGY.

An N-terminal signal peptide occupies residues 1–22; sequence MAPQNLSTFCLLLLYLIGAVIA. Residues 25–90 enclose the J domain; that stretch reads DFYKILGVPR…EKRKQYDTYG (66 aa). T188 carries the phosphothreonine modification. N261 carries an N-linked (GlcNAc...) asparagine glycan.

As to quaternary structure, part of a large chaperone multiprotein complex comprising DNAJB11, HSP90B1, HSPA5, HYOU, PDIA2, PDIA4, PDIA6, PPIB, SDF2L1, UGGT1 and very small amounts of ERP29, but not, or at very low levels, CALR nor CANX. Binds to denatured substrates in an ATP-independent manner. Interacts via the J domain with HSPA5 in an ATP-dependent manner. In terms of processing, contains high-mannose Endo H-sensitive carbohydrates. Post-translationally, cys-169, Cys-171, Cys-193 and Cys-196 form intramolecular disulfide bonds. The preferential partner for each Cys is not known.

It localises to the endoplasmic reticulum lumen. Its function is as follows. As a co-chaperone for HSPA5 it is required for proper folding, trafficking or degradation of proteins. Binds directly to both unfolded proteins that are substrates for ERAD and nascent unfolded peptide chains, but dissociates from the HSPA5-unfolded protein complex before folding is completed. May help recruiting HSPA5 and other chaperones to the substrate. Stimulates HSPA5 ATPase activity. It is necessary for maturation and correct trafficking of PKD1. The chain is DnaJ homolog subfamily B member 11 (Dnajb11) from Rattus norvegicus (Rat).